The primary structure comprises 489 residues: UDP-N-acetylmuramoyl-L-alanyl-D-glutamate--2,6-diaminopimelate ligase (489 aa).

Ser-30 provides a ligand contact to UDP-N-acetyl-alpha-D-muramoyl-L-alanyl-D-glutamate. 110 to 116 (GTNGKTT) contacts ATP. Residues 152 to 153 (TT), Ser-179, and Arg-187 each bind UDP-N-acetyl-alpha-D-muramoyl-L-alanyl-D-glutamate. Lys-219 carries the post-translational modification N6-carboxylysine. Residues Arg-381, 405–408 (DNPR), Gly-458, and Glu-462 contribute to the meso-2,6-diaminopimelate site. Positions 405 to 408 (DNPR) match the Meso-diaminopimelate recognition motif motif.

It belongs to the MurCDEF family. MurE subfamily. Mg(2+) serves as cofactor. Carboxylation is probably crucial for Mg(2+) binding and, consequently, for the gamma-phosphate positioning of ATP.

Its subcellular location is the cytoplasm. It carries out the reaction UDP-N-acetyl-alpha-D-muramoyl-L-alanyl-D-glutamate + meso-2,6-diaminopimelate + ATP = UDP-N-acetyl-alpha-D-muramoyl-L-alanyl-gamma-D-glutamyl-meso-2,6-diaminopimelate + ADP + phosphate + H(+). It participates in cell wall biogenesis; peptidoglycan biosynthesis. Functionally, catalyzes the addition of meso-diaminopimelic acid to the nucleotide precursor UDP-N-acetylmuramoyl-L-alanyl-D-glutamate (UMAG) in the biosynthesis of bacterial cell-wall peptidoglycan. In Syntrophomonas wolfei subsp. wolfei (strain DSM 2245B / Goettingen), this protein is UDP-N-acetylmuramoyl-L-alanyl-D-glutamate--2,6-diaminopimelate ligase.